Consider the following 61-residue polypeptide: MKKLKITLVKSPIGYKYDQKDTVKRLGLRKLNSTVIKEDVPQVRGMIRKVRHLVKVEEIEE.

Belongs to the universal ribosomal protein uL30 family. Part of the 50S ribosomal subunit.

This chain is Large ribosomal subunit protein uL30, found in Thermosipho melanesiensis (strain DSM 12029 / CIP 104789 / BI429).